We begin with the raw amino-acid sequence, 284 residues long: uncharacterized protein (284 aa).

The segment covering 1–10 has biased composition (polar residues); the sequence is MSNSVTNFEM. The tract at residues 1 to 28 is disordered; the sequence is MSNSVTNFEMSSVLPGKKPCQGKNNESQ.

This is an uncharacterized protein from Escherichia coli (strain K12).